Here is a 296-residue protein sequence, read N- to C-terminus: Glycine--tRNA ligase alpha subunit (296 aa).

Belongs to the class-II aminoacyl-tRNA synthetase family. In terms of assembly, tetramer of two alpha and two beta subunits.

It is found in the cytoplasm. It carries out the reaction tRNA(Gly) + glycine + ATP = glycyl-tRNA(Gly) + AMP + diphosphate. This is Glycine--tRNA ligase alpha subunit from Francisella philomiragia subsp. philomiragia (strain ATCC 25017 / CCUG 19701 / FSC 153 / O#319-036).